A 273-amino-acid chain; its full sequence is 4-hydroxy-tetrahydrodipicolinate reductase (273 aa).

Residues 12–17 (GAGGRM) and glutamate 38 contribute to the NAD(+) site. Arginine 39 contributes to the NADP(+) binding site. Residues 102 to 104 (GTT) and 126 to 129 (AANF) each bind NAD(+). The active-site Proton donor/acceptor is the histidine 159. Histidine 160 lines the (S)-2,3,4,5-tetrahydrodipicolinate pocket. The active-site Proton donor is lysine 163. 169-170 (GT) serves as a coordination point for (S)-2,3,4,5-tetrahydrodipicolinate.

It belongs to the DapB family. In terms of assembly, homotetramer.

It is found in the cytoplasm. It catalyses the reaction (S)-2,3,4,5-tetrahydrodipicolinate + NAD(+) + H2O = (2S,4S)-4-hydroxy-2,3,4,5-tetrahydrodipicolinate + NADH + H(+). It carries out the reaction (S)-2,3,4,5-tetrahydrodipicolinate + NADP(+) + H2O = (2S,4S)-4-hydroxy-2,3,4,5-tetrahydrodipicolinate + NADPH + H(+). Its pathway is amino-acid biosynthesis; L-lysine biosynthesis via DAP pathway; (S)-tetrahydrodipicolinate from L-aspartate: step 4/4. Its function is as follows. Catalyzes the conversion of 4-hydroxy-tetrahydrodipicolinate (HTPA) to tetrahydrodipicolinate. The polypeptide is 4-hydroxy-tetrahydrodipicolinate reductase (Escherichia coli O157:H7).